A 119-amino-acid polypeptide reads, in one-letter code: Small ribosomal subunit protein bS16 (119 aa).

It belongs to the bacterial ribosomal protein bS16 family.

This is Small ribosomal subunit protein bS16 from Chlamydia felis (strain Fe/C-56) (Chlamydophila felis).